The following is a 1215-amino-acid chain: Metabotropic glycine receptor (1215 aa).

A signal peptide spans methionine 1–glycine 23. Residues glycine 23–aspartate 66 are disordered. The Extracellular portion of the chain corresponds to alanine 24–arginine 417. Over residues proline 28–proline 40 the composition is skewed to basic and acidic residues. The segment covering alanine 52–serine 64 has biased composition (low complexity). The tract at residues tyrosine 85–tryptophan 281 is cache-like region. N-linked (GlcNAc...) asparagine glycans are attached at residues asparagine 98 and asparagine 143. Cysteine 99 and cysteine 272 are oxidised to a cystine. The glycine site is built by serine 172 and arginine 173. A glycan (N-linked (GlcNAc...) asparagine) is linked at asparagine 215. Glutamate 271 contacts glycine. Residue asparagine 274 is glycosylated (N-linked (GlcNAc...) asparagine). Aspartate 307 contacts glycine. An N-linked (GlcNAc...) asparagine glycan is attached at asparagine 333. The helical transmembrane segment at leucine 418–tyrosine 439 threads the bilayer. Over histidine 440 to glycine 451 the chain is Cytoplasmic. Residues leucine 452–phenylalanine 474 traverse the membrane as a helical segment. Topologically, residues glutamate 475–threonine 478 are extracellular. The chain crosses the membrane as a helical span at residues phenylalanine 479–leucine 501. An intrachain disulfide couples cysteine 481 to cysteine 573. At lysine 502 to arginine 525 the chain is on the cytoplasmic side. A helical transmembrane segment spans residues valine 526–serine 547. The Extracellular portion of the chain corresponds to valine 548–aspartate 576. Residues arginine 577–cysteine 597 form a helical membrane-spanning segment. Over tyrosine 598 to arginine 611 the chain is Cytoplasmic. A helical membrane pass occupies residues tyrosine 612–valine 633. Topologically, residues leucine 634 to tryptophan 642 are extracellular. A helical transmembrane segment spans residues methionine 643–isoleucine 664. The Cytoplasmic portion of the chain corresponds to proline 665–valine 1215. Phosphoserine occurs at positions 694, 705, and 708. The disordered stretch occupies residues arginine 757 to aspartate 999. Composition is skewed to basic and acidic residues over residues cysteine 769 to threonine 781 and serine 819 to threonine 828. A Glycyl lysine isopeptide (Lys-Gly) (interchain with G-Cter in ubiquitin) cross-link involves residue lysine 774. At serine 865 the chain carries Phosphoserine. Residues valine 925–arginine 943 are compositionally biased toward basic and acidic residues. Phosphoserine is present on serine 946. The segment covering glutamine 979–lysine 998 has biased composition (polar residues). 2 short sequence motifs (VCPWE motif) span residues valine 1006–glutamate 1010 and valine 1071–glutamate 1075. Position 1080 is a phosphoserine (serine 1080). Residues serine 1117 to proline 1164 form a disordered region. Basic and acidic residues predominate over residues histidine 1139–valine 1151. A compositionally biased stretch (polar residues) spans glycine 1153 to proline 1164. Residues valine 1171–glutamate 1175 carry the VCPWE motif 3 motif.

The protein belongs to the G-protein coupled receptor 3 family. As to quaternary structure, homodimer. Associates with the RGS7-GNB5 complex, promoting its localization to the cell membrane and regulating its GTPase activator activity. Interacts (via VCPWE motifs) with GNAO1. Interacts with GPC4. Interacts with EGFLAM.

It is found in the cell membrane. The protein resides in the postsynaptic cell membrane. The protein localises to the presynaptic cell membrane. Its subcellular location is the nucleus. Metabotropic receptor for glycine that controls synapse formation and function in the brain. Acts as an atypical G-protein coupled receptor that recruits and regulates the RGS7-GNB5 complex instead of activating G proteins. In absence of glycine ligand, promotes the GTPase activator activity of RGS7, increasing the GTPase activity of G protein alpha subunits, thereby driving them into their inactive GDP-bound form. Glycine-binding changes the conformation of the intracellular surface, inhibiting the GTPase activator activity of the RGS7-GNB5 complex, promoting G protein alpha subunits into their active GTP-bound form and regulating cAMP levels. Also able to bind taurine, a compound closely related to glycine, but with a two-fold lower affinity. Glycine receptor-dependent regulation of cAMP controls key ion channels, kinases and neurotrophic factors involved in neuronal excitability and synaptic transmission. Plays a pivotal role in regulating mood and cognition via its ability to regulate neuronal excitability in L2/L3 pyramidal neurons of the prefrontal cortex. Also involved in spatial learning by regulating hippocampal CA1 neuronal excitability. Acts as a synaptic organizer in the hippocampus, required for proper mossy fiber-CA3 neurocircuitry establishment, structure and function: induces presynaptic differentiation in contacting axons via its interaction with GPC4. In addition to glycine, may also act as a receptor for osteocalcin (BGLAP) hormone: osteocalcin-binding initiates a signaling response that prevents neuronal apoptosis in the hippocampus and regulates the synthesis of neurotransmitters. In Homo sapiens (Human), this protein is Metabotropic glycine receptor.